A 220-amino-acid polypeptide reads, in one-letter code: Inner membrane protein YqjA (220 aa).

Residues 1 to 27 (MELLTQLLQALWAQDFETLANPSMIGM) lie on the Periplasmic side of the membrane. Residues 28–48 (LYFVLFVILFLENGLLPAAFL) form a helical membrane-spanning segment. Topologically, residues 49–52 (PGDS) are cytoplasmic. 2 helical membrane-spanning segments follow: residues 53–73 (LLVL…QTIL) and 74–94 (LLTV…RWLG). Residues 95 to 154 (NTRTVQNWLSHLPAHYHQRAHHLFHKHGLSALLIGRFIAFVRTLLPTIAGLSGLNNARFQ) are Cytoplasmic-facing. A helical membrane pass occupies residues 155–175 (FFNWMSGLLWVLILTTLGYML). Topologically, residues 176–191 (GKTPVFLKYEDQLMSC) are periplasmic. A helical membrane pass occupies residues 192-212 (LMLLPVVLLVFGLAGSLVVLW). Residues 213-220 (KKKYGNRG) are Cytoplasmic-facing.

It belongs to the DedA family.

The protein resides in the cell inner membrane. In terms of biological role, may be a membrane transporter required for proton motive force (PMF)-dependent drug efflux. Required, with YghB, for the proper export of certain periplasmic amidases and, possibly, other Tat substrates. May play a role in determining membrane lipid composition. This is Inner membrane protein YqjA (yqjA) from Escherichia coli (strain K12).